Consider the following 144-residue polypeptide: uncharacterized protein (144 aa).

Transmembrane regions (helical) follow at residues 16-36 (FLIF…GAIF), 48-68 (GFIV…ALII), 87-107 (LLPE…LVLL), and 120-140 (VMSL…WYFG).

The protein localises to the cell membrane. This is an uncharacterized protein from Methanocaldococcus jannaschii (strain ATCC 43067 / DSM 2661 / JAL-1 / JCM 10045 / NBRC 100440) (Methanococcus jannaschii).